Here is a 3095-residue protein sequence, read N- to C-terminus: HD protein homolog (3095 aa).

5 disordered regions span residues 105 to 197, 536 to 561, 1312 to 1371, 1509 to 1547, and 2005 to 2037; these read PHQH…NGNA, QQQQQQQQQQQQQQQQHNLTSSTMSG, PPQQ…STVI, KSTSSSSSSSSTATSPSSSSSSTTTTTTTSTNTTTTTPS, and KELTNNNNNNNNNIIEKEEEEKEKEKEKVKEEE. The span at 115 to 139 shows a compositional bias: polar residues; it reads STNLTDHLSQNSVTPSVPTTPNYQQ. Composition is skewed to low complexity over residues 140–197 and 536–551; these read SPST…NGNA and QQQQQQQQQQQQQQQQ. Positions 552–561 are enriched in polar residues; sequence HNLTSSTMSG. Composition is skewed to low complexity over residues 1315-1368, 1510-1547, and 2008-2018; these read QQQQ…LNNS, STSSSSSSSSTATSPSSSSSSTTTTTTTSTNTTTTTPS, and TNNNNNNNNNI.

Belongs to the huntingtin family.

The protein resides in the cytoplasm. It localises to the nucleus. Its function is as follows. May play a role in microtubule-mediated transport or vesicle function. In Dictyostelium discoideum (Social amoeba), this protein is HD protein homolog (htt).